A 545-amino-acid chain; its full sequence is Glucose-6-phosphate isomerase (545 aa).

Residue glutamate 351 is the Proton donor of the active site. Catalysis depends on residues histidine 382 and lysine 510.

This sequence belongs to the GPI family.

It is found in the cytoplasm. The enzyme catalyses alpha-D-glucose 6-phosphate = beta-D-fructose 6-phosphate. Its pathway is carbohydrate biosynthesis; gluconeogenesis. It functions in the pathway carbohydrate degradation; glycolysis; D-glyceraldehyde 3-phosphate and glycerone phosphate from D-glucose: step 2/4. Functionally, catalyzes the reversible isomerization of glucose-6-phosphate to fructose-6-phosphate. The chain is Glucose-6-phosphate isomerase from Helicobacter pylori (strain Shi470).